We begin with the raw amino-acid sequence, 357 residues long: Alanine racemase (357 aa).

Residue lysine 34 is the Proton acceptor; specific for D-alanine of the active site. N6-(pyridoxal phosphate)lysine is present on lysine 34. Arginine 127 is a binding site for substrate. Tyrosine 252 serves as the catalytic Proton acceptor; specific for L-alanine. Substrate is bound at residue methionine 301.

The protein belongs to the alanine racemase family. It depends on pyridoxal 5'-phosphate as a cofactor.

The enzyme catalyses L-alanine = D-alanine. Its pathway is amino-acid biosynthesis; D-alanine biosynthesis; D-alanine from L-alanine: step 1/1. Its function is as follows. Catalyzes the interconversion of L-alanine and D-alanine. May also act on other amino acids. This Dichelobacter nodosus (strain VCS1703A) protein is Alanine racemase (alr).